The primary structure comprises 179 residues: NAD(P)H-quinone oxidoreductase subunit I, chloroplastic (179 aa).

4Fe-4S ferredoxin-type domains lie at 55-84 (GRIH…VDWR) and 95-124 (LNYS…MTEE). Positions 64, 67, 70, 74, 104, 107, 110, and 114 each coordinate [4Fe-4S] cluster.

This sequence belongs to the complex I 23 kDa subunit family. NDH is composed of at least 16 different subunits, 5 of which are encoded in the nucleus. [4Fe-4S] cluster is required as a cofactor.

Its subcellular location is the plastid. The protein localises to the chloroplast thylakoid membrane. The catalysed reaction is a plastoquinone + NADH + (n+1) H(+)(in) = a plastoquinol + NAD(+) + n H(+)(out). It carries out the reaction a plastoquinone + NADPH + (n+1) H(+)(in) = a plastoquinol + NADP(+) + n H(+)(out). In terms of biological role, NDH shuttles electrons from NAD(P)H:plastoquinone, via FMN and iron-sulfur (Fe-S) centers, to quinones in the photosynthetic chain and possibly in a chloroplast respiratory chain. The immediate electron acceptor for the enzyme in this species is believed to be plastoquinone. Couples the redox reaction to proton translocation, and thus conserves the redox energy in a proton gradient. The sequence is that of NAD(P)H-quinone oxidoreductase subunit I, chloroplastic from Nymphaea alba (White water-lily).